A 404-amino-acid chain; its full sequence is D-galactonate dehydratase family member PC1_0802 (404 aa).

Substrate-binding residues include Asn37 and His122. Tyr159 acts as the Proton donor/acceptor in catalysis. Position 212 (Asp212) interacts with Mg(2+). The Proton donor/acceptor role is filled by His214. Mg(2+)-binding residues include Glu238 and Glu264. Residues Glu264, Arg285, His314, Asp318, and Glu341 each coordinate substrate.

The protein belongs to the mandelate racemase/muconate lactonizing enzyme family. GalD subfamily. Mg(2+) is required as a cofactor.

The enzyme catalyses D-mannonate = 2-dehydro-3-deoxy-D-gluconate + H2O. Its function is as follows. Has low D-mannonate dehydratase activity (in vitro), suggesting that this is not a physiological substrate and that it has no significant role in D-mannonate degradation in vivo. Has no detectable activity with a panel of 70 other acid sugars (in vitro). The polypeptide is D-galactonate dehydratase family member PC1_0802 (Pectobacterium carotovorum subsp. carotovorum (strain PC1)).